A 1588-amino-acid chain; its full sequence is Pentafunctional AROM polypeptide (1588 aa).

Residues 1–392 (MVQLAKVPIL…YGDSAQFVSD (392 aa)) form a 3-dehydroquinate synthase region. NAD(+) contacts are provided by residues 43-45 (DTN), 78-81 (ETSK), 109-111 (GGV), and Asp114. Position 125 (Arg125) interacts with 7-phospho-2-dehydro-3-deoxy-D-arabino-heptonate. 134-135 (TS) serves as a coordination point for NAD(+). The 7-phospho-2-dehydro-3-deoxy-D-arabino-heptonate site is built by Asp141 and Lys147. Lys156 contacts NAD(+). Residue Asn157 coordinates 7-phospho-2-dehydro-3-deoxy-D-arabino-heptonate. NAD(+) is bound by residues 174–177 (WLET) and Asn185. Zn(2+) is bound at residue Glu189. Residues 189–192 (EVIK) and Lys258 contribute to the 7-phospho-2-dehydro-3-deoxy-D-arabino-heptonate site. Residue Glu268 is the Proton acceptor; for 3-dehydroquinate synthase activity of the active site. Residues 272-276 (RNLLN) and His279 each bind 7-phospho-2-dehydro-3-deoxy-D-arabino-heptonate. Residue His279 participates in Zn(2+) binding. Residue His283 is the Proton acceptor; for 3-dehydroquinate synthase activity of the active site. 7-phospho-2-dehydro-3-deoxy-D-arabino-heptonate contacts are provided by His295 and Lys364. His295 lines the Zn(2+) pocket. The interval 405-871 (VYPFKDIPAD…WDVLHSELGA (467 aa)) is EPSP synthase. The active-site For EPSP synthase activity is Cys853. The tract at residues 890–1080 (SVVIIGMRAA…IPSGRSAFVC (191 aa)) is shikimate kinase. 895–902 (GMRAAGKT) lines the ATP pocket. The tract at residues 1081 to 1293 (LTFDDLTEQT…AAPGQLTVAQ (213 aa)) is 3-dehydroquinase. His1198 functions as the Proton acceptor; for 3-dehydroquinate dehydratase activity in the catalytic mechanism. Lys1227 (schiff-base intermediate with substrate; for 3-dehydroquinate dehydratase activity) is an active-site residue. The shikimate dehydrogenase stretch occupies residues 1306-1588 (PKELFVVGKP…KAIFDAVTKE (283 aa)).

The protein in the N-terminal section; belongs to the sugar phosphate cyclases superfamily. Dehydroquinate synthase family. This sequence in the 2nd section; belongs to the EPSP synthase family. In the 3rd section; belongs to the shikimate kinase family. It in the 4th section; belongs to the type-I 3-dehydroquinase family. The protein in the C-terminal section; belongs to the shikimate dehydrogenase family. Homodimer. It depends on Zn(2+) as a cofactor.

It is found in the cytoplasm. The catalysed reaction is 7-phospho-2-dehydro-3-deoxy-D-arabino-heptonate = 3-dehydroquinate + phosphate. It carries out the reaction 3-dehydroquinate = 3-dehydroshikimate + H2O. It catalyses the reaction shikimate + NADP(+) = 3-dehydroshikimate + NADPH + H(+). The enzyme catalyses shikimate + ATP = 3-phosphoshikimate + ADP + H(+). The catalysed reaction is 3-phosphoshikimate + phosphoenolpyruvate = 5-O-(1-carboxyvinyl)-3-phosphoshikimate + phosphate. The protein operates within metabolic intermediate biosynthesis; chorismate biosynthesis; chorismate from D-erythrose 4-phosphate and phosphoenolpyruvate: step 2/7. It participates in metabolic intermediate biosynthesis; chorismate biosynthesis; chorismate from D-erythrose 4-phosphate and phosphoenolpyruvate: step 3/7. Its pathway is metabolic intermediate biosynthesis; chorismate biosynthesis; chorismate from D-erythrose 4-phosphate and phosphoenolpyruvate: step 4/7. It functions in the pathway metabolic intermediate biosynthesis; chorismate biosynthesis; chorismate from D-erythrose 4-phosphate and phosphoenolpyruvate: step 5/7. The protein operates within metabolic intermediate biosynthesis; chorismate biosynthesis; chorismate from D-erythrose 4-phosphate and phosphoenolpyruvate: step 6/7. The AROM polypeptide catalyzes 5 consecutive enzymatic reactions in prechorismate polyaromatic amino acid biosynthesis. This chain is Pentafunctional AROM polypeptide, found in Saccharomyces cerevisiae (strain RM11-1a) (Baker's yeast).